The chain runs to 526 residues: MLLRILTFLAVCQVTTSHKILMFSPTASKSHMISQGRIADELANAGHEVVNFEPDFLNLTDKFVPCKKCRRWPVTGLNNYKFKKIQNGLSGDVFQQSSIWSKIFNTDSDPYQDEYTNMCEEMVTNKELIEKLKKEKFDAYFGEQIHLCGMGLAHLIGIKHRFWIASCTMSVSMRDSLGIPTPSSLIPFMSTLDATPAPFWQRAKNFVLQMAHIRDEYRDVVLTNDMFKKNFGSDFPCVEFLAKTSDLIFVSTDELLEIQAPTLSNVVHIGGLGLSSEGGGLDEKFVKIMEKGKGVILFSLGTIANTTNLPPTIMENLMKITQKFKDYEFIIKVDKFDRRSFDLAEGLSNVLVVDWVPQTAVLAHPRLKAFITHAGYNSLMESAYAGVPVILIPFMFDQPRNGRSVERKGWGILRDRFQLIKDPDAIEGAIKEILVNPTYQEKANRLKKLMRSKPQSASERLVKMTNWVLENDGVEELQYEGKHMDFFTFYNLDIIITAASIPVLIFIVLRISNISIITSSPKNKKD.

Positions Met-1–Ser-17 are cleaved as a signal peptide. N-linked (GlcNAc...) asparagine glycosylation is found at Asn-58 and Asn-305. The chain crosses the membrane as a helical span at residues Phe-489–Leu-509. A glycan (N-linked (GlcNAc...) asparagine) is linked at Asn-513.

Belongs to the UDP-glycosyltransferase family. In terms of assembly, interacts with cmd-1 in the presence of Ca(2+).

Its subcellular location is the membrane. It catalyses the reaction glucuronate acceptor + UDP-alpha-D-glucuronate = acceptor beta-D-glucuronoside + UDP + H(+). The polypeptide is Putative UDP-glucuronosyltransferase ugt-48 (ugt-48) (Caenorhabditis elegans).